The primary structure comprises 113 residues: UPF0122 protein LAF_1235 (113 aa).

It belongs to the UPF0122 family.

Functionally, might take part in the signal recognition particle (SRP) pathway. This is inferred from the conservation of its genetic proximity to ftsY/ffh. May be a regulatory protein. This chain is UPF0122 protein LAF_1235, found in Limosilactobacillus fermentum (strain NBRC 3956 / LMG 18251) (Lactobacillus fermentum).